A 101-amino-acid chain; its full sequence is MIPGEIMPKEGDITLNEGAEAITLMVANTGDRPVQVGSHYHFAEANAALEFDRDAARGMRLDITAGTAVRFEPGQRRDVQLIPISGARRIFGFNQQVMGDL.

It belongs to the urease beta subunit family. Heterotrimer of UreA (gamma), UreB (beta) and UreC (alpha) subunits. Three heterotrimers associate to form the active enzyme.

The protein resides in the cytoplasm. The catalysed reaction is urea + 2 H2O + H(+) = hydrogencarbonate + 2 NH4(+). It participates in nitrogen metabolism; urea degradation; CO(2) and NH(3) from urea (urease route): step 1/1. The protein is Urease subunit beta of Roseobacter denitrificans (strain ATCC 33942 / OCh 114) (Erythrobacter sp. (strain OCh 114)).